Here is a 677-residue protein sequence, read N- to C-terminus: L-type lectin-domain containing receptor kinase IV.2 (677 aa).

An N-terminal signal peptide occupies residues 1–22; the sequence is MFVKLKLIFFFFLLCQIMISSS. At 23-291 the chain is on the extracellular side; that stretch reads QNLNFTYNGF…EPRRISEFYK (269 aa). Positions 24–262 are legume-lectin like; sequence NLNFTYNGFH…EHFLVGWSFR (239 aa). Asn-26, Asn-57, Asn-81, Asn-128, Asn-134, Asn-171, Asn-186, and Asn-203 each carry an N-linked (GlcNAc...) asparagine glycan. A helical membrane pass occupies residues 292 to 312; the sequence is IGMPLISLSLIFSIIFLAFYI. The Cytoplasmic portion of the chain corresponds to 313-677; the sequence is VRRKKKYEEE…IADSLLSGGR (365 aa). A Protein kinase domain is found at 347–625; it reads FKEKDLLGSG…LQYLRGDMAL (279 aa). ATP-binding positions include 353 to 361 and Lys-376; that span reads LGSGGFGRV. The active-site Proton acceptor is the Asp-472.

In the C-terminal section; belongs to the protein kinase superfamily. Ser/Thr protein kinase family. It in the N-terminal section; belongs to the leguminous lectin family.

The protein localises to the cell membrane. It carries out the reaction L-seryl-[protein] + ATP = O-phospho-L-seryl-[protein] + ADP + H(+). The enzyme catalyses L-threonyl-[protein] + ATP = O-phospho-L-threonyl-[protein] + ADP + H(+). Functionally, required during pollen development. In terms of biological role, involved in resistance response to the pathogenic bacteria Pseudomonas syringae. This Arabidopsis thaliana (Mouse-ear cress) protein is L-type lectin-domain containing receptor kinase IV.2.